Reading from the N-terminus, the 344-residue chain is Trace amine-associated receptor 8c (344 aa).

The Extracellular segment spans residues 1–31; sequence MTSNFSQPALQLCYENTNGSCIKTPYSPGPR. 2 N-linked (GlcNAc...) asparagine glycosylation sites follow: N4 and N18. Disulfide bonds link C21–C185 and C104–C189. Residues 32–52 traverse the membrane as a helical segment; it reads VILYMVYGFGAVLAVCGNLLV. The Cytoplasmic segment spans residues 53 to 67; it reads VISVLHFKQLHSPAN. A helical transmembrane segment spans residues 68 to 88; sequence FLIASLASADFLVGISVMPFS. Residues 89–111 lie on the Extracellular side of the membrane; the sequence is MVRSIESCWYFGDAFCSLHSCCD. The helical transmembrane segment at 112–132 threads the bilayer; the sequence is VAFCYSSALHLCFISVDRYIA. The Cytoplasmic portion of the chain corresponds to 133 to 146; sequence VTDPLVYPTKFTVS. The helical transmembrane segment at 147 to 167 threads the bilayer; the sequence is VSGICISISWILPLVYSSAVF. The Extracellular segment spans residues 168-195; sequence YTGISAKGIESLVSALNCVGGCQVVVNQ. Residues 196-216 form a helical membrane-spanning segment; the sequence is DWVLISFLLFFIPTVVMIILY. Topologically, residues 217–260 are cytoplasmic; it reads SKIFLVAKQQAVKIETSVSGNRGESSSESHKARVAKRERKAAKT. Residues 261–281 form a helical membrane-spanning segment; that stretch reads LGVTVVAFMVSWLPYTIDALV. Residue D282 is a topological domain, extracellular. A helical membrane pass occupies residues 283-303; sequence AFMGFITPAYVYEICCWSAYY. Topologically, residues 304–344 are cytoplasmic; the sequence is NSAMNPLIYAFFYPWFRKAIKLILSGKILKGHSSTTNLFSE.

Belongs to the G-protein coupled receptor 1 family. Specifically expressed in neurons of the olfactory epithelium.

It localises to the cell membrane. In terms of biological role, olfactory receptor specific for trace amines, such ascyclohexylamine (1-MPD). Trace amine compounds are enriched in animal body fluids and act on trace amine-associated receptors (TAARs) to elicit both intraspecific and interspecific innate behaviors. Ligand-binding causes a conformation change that triggers signaling via G(s)-class of G alpha proteins (GNAL or GNAS). The polypeptide is Trace amine-associated receptor 8c (Mus musculus (Mouse)).